The sequence spans 379 residues: Glutamate 5-kinase (379 aa).

K20 is a binding site for ATP. Residues S59, D146, and N158 each coordinate substrate. 220-226 contributes to the ATP binding site; it reads SGGMYSK. One can recognise a PUA domain in the interval 285-362; it reads TGSVVVDDGA…AELTAILGDN (78 aa).

It belongs to the glutamate 5-kinase family.

It localises to the cytoplasm. The enzyme catalyses L-glutamate + ATP = L-glutamyl 5-phosphate + ADP. Its pathway is amino-acid biosynthesis; L-proline biosynthesis; L-glutamate 5-semialdehyde from L-glutamate: step 1/2. Catalyzes the transfer of a phosphate group to glutamate to form L-glutamate 5-phosphate. The protein is Glutamate 5-kinase of Oleidesulfovibrio alaskensis (strain ATCC BAA-1058 / DSM 17464 / G20) (Desulfovibrio alaskensis).